The following is a 511-amino-acid chain: RNA-splicing ligase RtcB homolog (511 aa).

Mn(2+) contacts are provided by aspartate 125, cysteine 128, histidine 233, histidine 265, and histidine 359. 232–236 (NHYAE) contacts GMP. GMP contacts are provided by residues 359 to 360 (HN), 408 to 411 (GGTM), serine 415, 434 to 437 (HGAG), and lysine 510. Histidine 434 functions as the GMP-histidine intermediate in the catalytic mechanism.

The protein belongs to the RtcB family. As to quaternary structure, catalytic component of the tRNA-splicing ligase complex. It depends on Mn(2+) as a cofactor.

The enzyme catalyses a 3'-end 3'-phospho-ribonucleotide-RNA + a 5'-end dephospho-ribonucleoside-RNA + GTP = a ribonucleotidyl-ribonucleotide-RNA + GMP + diphosphate. It catalyses the reaction a 3'-end 2',3'-cyclophospho-ribonucleotide-RNA + a 5'-end dephospho-ribonucleoside-RNA + GTP + H2O = a ribonucleotidyl-ribonucleotide-RNA + GMP + diphosphate + H(+). Catalytic subunit of the tRNA-splicing ligase complex that acts by directly joining spliced tRNA halves to mature-sized tRNAs by incorporating the precursor-derived splice junction phosphate into the mature tRNA as a canonical 3',5'-phosphodiester. May act as an RNA ligase with broad substrate specificity, and may function toward other RNAs. This chain is RNA-splicing ligase RtcB homolog, found in Plasmodium knowlesi (strain H).